Reading from the N-terminus, the 201-residue chain is Pyridoxal 5'-phosphate synthase subunit PdxT (201 aa).

L-glutamine is bound at residue 50 to 52 (GES). Catalysis depends on cysteine 82, which acts as the Nucleophile. L-glutamine is bound by residues arginine 115 and 143 to 144 (IR). Residues histidine 179 and glutamate 181 each act as charge relay system in the active site.

It belongs to the glutaminase PdxT/SNO family. In the presence of PdxS, forms a dodecamer of heterodimers. Only shows activity in the heterodimer.

It catalyses the reaction aldehydo-D-ribose 5-phosphate + D-glyceraldehyde 3-phosphate + L-glutamine = pyridoxal 5'-phosphate + L-glutamate + phosphate + 3 H2O + H(+). It carries out the reaction L-glutamine + H2O = L-glutamate + NH4(+). The protein operates within cofactor biosynthesis; pyridoxal 5'-phosphate biosynthesis. In terms of biological role, catalyzes the hydrolysis of glutamine to glutamate and ammonia as part of the biosynthesis of pyridoxal 5'-phosphate. The resulting ammonia molecule is channeled to the active site of PdxS. This chain is Pyridoxal 5'-phosphate synthase subunit PdxT, found in Deinococcus geothermalis (strain DSM 11300 / CIP 105573 / AG-3a).